The sequence spans 349 residues: Protein Wnt-7a (349 aa).

Positions 1–31 (MNRKARRCLGHLFLSLGMVYLRIGGFSTVVA) are cleaved as a signal peptide. 5 disulfides stabilise this stretch: C73–C84, C123–C131, C133–C152, C200–C214, and C202–C209. N-linked (GlcNAc...) asparagine glycans are attached at residues N83 and N127. Residue S206 is the site of O-palmitoleoyl serine; by PORCN attachment. Residues 238–266 (VEPVRASRNKRPTFLKIKKPLSYRKPMDT) form a disordered linker region. 6 disulfides stabilise this stretch: C278–C309, C294–C304, C308–C348, C324–C339, C326–C336, and C331–C332. An N-linked (GlcNAc...) asparagine glycan is attached at N295.

It belongs to the Wnt family. Forms a soluble 1:1 complex with AFM; this prevents oligomerization and is required for prolonged biological activity. The complex with AFM may represent the physiological form in body fluids. Interacts with PORCN. Interacts (via intrinsically disordered linker region) with RECK; interaction with RECK confers ligand selectivity for Wnt7 in brain endothelial cells and allows these cells to selectively respond to Wnt7. Interacts with FZD5. In terms of processing, palmitoleoylation is required for efficient binding to frizzled receptors. Depalmitoleoylation leads to Wnt signaling pathway inhibition.

The protein resides in the secreted. The protein localises to the extracellular space. Its subcellular location is the extracellular matrix. Functionally, ligand for members of the frizzled family of seven transmembrane receptors that functions in the canonical Wnt/beta-catenin signaling pathway. Plays an important role in embryonic development, including dorsal versus ventral patterning during limb development, skeleton development and urogenital tract development. Required for central nervous system (CNS) angiogenesis and blood-brain barrier regulation. Required for normal, sexually dimorphic development of the Mullerian ducts, and for normal fertility in both sexes. Required for normal neural stem cell proliferation in the hippocampus dentate gyrus. Required for normal progress through the cell cycle in neural progenitor cells, for self-renewal of neural stem cells, and for normal neuronal differentiation and maturation. Promotes formation of synapses via its interaction with FZD5. The chain is Protein Wnt-7a (WNT7A) from Chlorocebus aethiops (Green monkey).